Here is a 142-residue protein sequence, read N- to C-terminus: Large ribosomal subunit protein uL11 (142 aa).

This sequence belongs to the universal ribosomal protein uL11 family. In terms of assembly, part of the ribosomal stalk of the 50S ribosomal subunit. Interacts with L10 and the large rRNA to form the base of the stalk. L10 forms an elongated spine to which L12 dimers bind in a sequential fashion forming a multimeric L10(L12)X complex. In terms of processing, one or more lysine residues are methylated.

Functionally, forms part of the ribosomal stalk which helps the ribosome interact with GTP-bound translation factors. This Bartonella tribocorum (strain CIP 105476 / IBS 506) protein is Large ribosomal subunit protein uL11.